The chain runs to 289 residues: Phosphatidylglycerol--prolipoprotein diacylglyceryl transferase (289 aa).

7 helical membrane-spanning segments follow: residues 23-43 (ALHW…WLAV), 61-81 (LLYM…VLFY), 99-119 (GGMS…WFAH), 125-145 (FFQV…AGRL), 199-219 (SQLY…NLFI), 226-246 (GSVS…TEFF), and 259-279 (LFSM…LMMV). Arg144 is a binding site for a 1,2-diacyl-sn-glycero-3-phospho-(1'-sn-glycerol).

The protein belongs to the Lgt family.

The protein localises to the cell inner membrane. The catalysed reaction is L-cysteinyl-[prolipoprotein] + a 1,2-diacyl-sn-glycero-3-phospho-(1'-sn-glycerol) = an S-1,2-diacyl-sn-glyceryl-L-cysteinyl-[prolipoprotein] + sn-glycerol 1-phosphate + H(+). It participates in protein modification; lipoprotein biosynthesis (diacylglyceryl transfer). Functionally, catalyzes the transfer of the diacylglyceryl group from phosphatidylglycerol to the sulfhydryl group of the N-terminal cysteine of a prolipoprotein, the first step in the formation of mature lipoproteins. This is Phosphatidylglycerol--prolipoprotein diacylglyceryl transferase from Pectobacterium atrosepticum (strain SCRI 1043 / ATCC BAA-672) (Erwinia carotovora subsp. atroseptica).